The primary structure comprises 53 residues: UPF0391 membrane protein Ent638_0536 (53 aa).

The next 2 helical transmembrane spans lie at 4 to 24 (WGII…GGLA) and 27 to 47 (AAWA…VSLF).

Belongs to the UPF0391 family.

It is found in the cell membrane. This is UPF0391 membrane protein Ent638_0536 from Enterobacter sp. (strain 638).